Here is a 1508-residue protein sequence, read N- to C-terminus: DNA-directed RNA polymerase subunit beta' (1508 aa).

Residues Cys-71, Cys-73, Cys-86, and Cys-89 each coordinate Zn(2+). Mg(2+)-binding residues include Asp-470, Asp-472, and Asp-474. Zn(2+) is bound by residues Cys-804, Cys-878, Cys-885, and Cys-888.

Belongs to the RNA polymerase beta' chain family. As to quaternary structure, the RNAP catalytic core consists of 2 alpha, 1 beta, 1 beta' and 1 omega subunit. When a sigma factor is associated with the core the holoenzyme is formed, which can initiate transcription. It depends on Mg(2+) as a cofactor. The cofactor is Zn(2+).

The enzyme catalyses RNA(n) + a ribonucleoside 5'-triphosphate = RNA(n+1) + diphosphate. In terms of biological role, DNA-dependent RNA polymerase catalyzes the transcription of DNA into RNA using the four ribonucleoside triphosphates as substrates. The sequence is that of DNA-directed RNA polymerase subunit beta' from Campylobacter fetus subsp. fetus (strain 82-40).